Consider the following 226-residue polypeptide: MVKYLSQSEAIELDLDLFEMFHVGQLMELAGLSCADAVAECFPAQTHPRVLVVCGPGNNGGDGLVCARHLSLMGYQPTVYYPKPTLMSLYENLTNQCHHMEIPSVKKCPSLSDAEEDYDLILDALFGFGFKPPVREDFVPLVKMMQETKVPIASVDIPSGWDVEKGKQSECDFEPKLLISLTAPKLCAEHFKGEHHYLGGRFVPPALQRKYQLNLPDYGSKLVVRL.

The 206-residue stretch at Ala10–Leu215 folds into the YjeF N-terminal domain. Asn58 to Asp62 contacts (6S)-NADPHX. Residues Asn59 and Asp123 each contribute to the K(+) site. Residues Gly127 to Pro133 and Asp156 each bind (6S)-NADPHX. Ser159 contacts K(+).

The protein belongs to the NnrE/AIBP family. Requires K(+) as cofactor.

It carries out the reaction (6R)-NADHX = (6S)-NADHX. It catalyses the reaction (6R)-NADPHX = (6S)-NADPHX. Functionally, catalyzes the epimerization of the S- and R-forms of NAD(P)HX, a damaged form of NAD(P)H that is a result of enzymatic or heat-dependent hydration. This is a prerequisite for the S-specific NAD(P)H-hydrate dehydratase to allow the repair of both epimers of NAD(P)HX. This chain is NAD(P)H-hydrate epimerase, found in Drosophila persimilis (Fruit fly).